Here is a 386-residue protein sequence, read N- to C-terminus: Probable mannan endo-1,4-beta-mannosidase A (386 aa).

The N-terminal stretch at 1–21 is a signal peptide; the sequence is MKLNPSLLTAAGLVSAQLASA. Residues tryptophan 95 and asparagine 207 each coordinate substrate. Glutamate 208 functions as the Proton donor in the catalytic mechanism. Tyrosine 283 contacts substrate. The Nucleophile role is filled by glutamate 316. A glycan (N-linked (GlcNAc...) asparagine) is linked at asparagine 336. Position 346 (tryptophan 346) interacts with substrate.

This sequence belongs to the glycosyl hydrolase 5 (cellulase A) family.

The protein resides in the secreted. It carries out the reaction Random hydrolysis of (1-&gt;4)-beta-D-mannosidic linkages in mannans, galactomannans and glucomannans.. Endo-1,4-mannanase, a crucial enzyme for depolymerization of seed galactomannans and wood galactoglucomannans. The chain is Probable mannan endo-1,4-beta-mannosidase A (manA) from Aspergillus oryzae (strain ATCC 42149 / RIB 40) (Yellow koji mold).